The sequence spans 167 residues: MNFFEKILVFLGLAEEAEEEIIEDEEDVAPVNNSTFQEKKHKKRSAVQRKQKNSDQEGDSVVPLHSTKNTQGIKIHLIAPSKYEEAQEIGKYLKSGFPVVVNLEQLEMETAKQMIDFVSGTVFALDGNLHKIGQQIFLFSPPNVGIDGAIDTTGDEFFDQKTYEEYE.

A disordered region spans residues 25–64 (EEDVAPVNNSTFQEKKHKKRSAVQRKQKNSDQEGDSVVPL). Residues 39-51 (KKHKKRSAVQRKQ) are compositionally biased toward basic residues.

It belongs to the SepF family. Homodimer. Interacts with FtsZ.

Its subcellular location is the cytoplasm. Cell division protein that is part of the divisome complex and is recruited early to the Z-ring. Probably stimulates Z-ring formation, perhaps through the cross-linking of FtsZ protofilaments. Its function overlaps with FtsA. The protein is Cell division protein SepF of Natranaerobius thermophilus (strain ATCC BAA-1301 / DSM 18059 / JW/NM-WN-LF).